The sequence spans 91 residues: Small ribosomal subunit protein uS15c (91 aa).

It belongs to the universal ribosomal protein uS15 family. As to quaternary structure, part of the 30S ribosomal subunit.

It localises to the plastid. The protein localises to the chloroplast. This is Small ribosomal subunit protein uS15c (rps15) from Cicer arietinum (Chickpea).